A 199-amino-acid polypeptide reads, in one-letter code: FMN-dependent NADH:quinone oxidoreductase (199 aa).

17–19 (SYS) lines the FMN pocket.

Belongs to the azoreductase type 1 family. As to quaternary structure, homodimer. FMN serves as cofactor.

It carries out the reaction 2 a quinone + NADH + H(+) = 2 a 1,4-benzosemiquinone + NAD(+). The catalysed reaction is N,N-dimethyl-1,4-phenylenediamine + anthranilate + 2 NAD(+) = 2-(4-dimethylaminophenyl)diazenylbenzoate + 2 NADH + 2 H(+). Its function is as follows. Quinone reductase that provides resistance to thiol-specific stress caused by electrophilic quinones. Also exhibits azoreductase activity. Catalyzes the reductive cleavage of the azo bond in aromatic azo compounds to the corresponding amines. The sequence is that of FMN-dependent NADH:quinone oxidoreductase from Mycoplasmopsis synoviae (strain 53) (Mycoplasma synoviae).